Consider the following 365-residue polypeptide: Histidinol-phosphate aminotransferase (365 aa).

Positions 1–23 (MSRPVPNPGILDIAPYTPGKSPV) are disordered. N6-(pyridoxal phosphate)lysine is present on K221.

Belongs to the class-II pyridoxal-phosphate-dependent aminotransferase family. Histidinol-phosphate aminotransferase subfamily. Homodimer. Pyridoxal 5'-phosphate serves as cofactor.

It carries out the reaction L-histidinol phosphate + 2-oxoglutarate = 3-(imidazol-4-yl)-2-oxopropyl phosphate + L-glutamate. The protein operates within amino-acid biosynthesis; L-histidine biosynthesis; L-histidine from 5-phospho-alpha-D-ribose 1-diphosphate: step 7/9. The sequence is that of Histidinol-phosphate aminotransferase from Rhodopseudomonas palustris (strain BisB18).